The following is a 471-amino-acid chain: Glutamate--tRNA ligase 1 (471 aa).

The 'HIGH' region motif lies at 15–25; sequence PSPTGYLHIGG. The short motif at 243–247 is the 'KMSKS' region element; sequence KLSKR. Lys246 lines the ATP pocket.

Belongs to the class-I aminoacyl-tRNA synthetase family. Glutamate--tRNA ligase type 1 subfamily. As to quaternary structure, monomer.

It localises to the cytoplasm. It catalyses the reaction tRNA(Glu) + L-glutamate + ATP = L-glutamyl-tRNA(Glu) + AMP + diphosphate. Functionally, catalyzes the attachment of glutamate to tRNA(Glu) in a two-step reaction: glutamate is first activated by ATP to form Glu-AMP and then transferred to the acceptor end of tRNA(Glu). This chain is Glutamate--tRNA ligase 1, found in Dinoroseobacter shibae (strain DSM 16493 / NCIMB 14021 / DFL 12).